Reading from the N-terminus, the 206-residue chain is Large ribosomal subunit protein uL4 (206 aa).

This sequence belongs to the universal ribosomal protein uL4 family. In terms of assembly, part of the 50S ribosomal subunit.

One of the primary rRNA binding proteins, this protein initially binds near the 5'-end of the 23S rRNA. It is important during the early stages of 50S assembly. It makes multiple contacts with different domains of the 23S rRNA in the assembled 50S subunit and ribosome. In terms of biological role, forms part of the polypeptide exit tunnel. In Afipia carboxidovorans (strain ATCC 49405 / DSM 1227 / KCTC 32145 / OM5) (Oligotropha carboxidovorans), this protein is Large ribosomal subunit protein uL4.